Here is a 464-residue protein sequence, read N- to C-terminus: Asparagine--tRNA ligase (464 aa).

The protein belongs to the class-II aminoacyl-tRNA synthetase family. As to quaternary structure, homodimer.

Its subcellular location is the cytoplasm. It catalyses the reaction tRNA(Asn) + L-asparagine + ATP = L-asparaginyl-tRNA(Asn) + AMP + diphosphate + H(+). This chain is Asparagine--tRNA ligase, found in Cytophaga hutchinsonii (strain ATCC 33406 / DSM 1761 / CIP 103989 / NBRC 15051 / NCIMB 9469 / D465).